The chain runs to 420 residues: 3-phosphoshikimate 1-carboxyvinyltransferase (420 aa).

Positions 26, 27, and 31 each coordinate 3-phosphoshikimate. K26 contacts phosphoenolpyruvate. The phosphoenolpyruvate site is built by G97 and R125. 6 residues coordinate 3-phosphoshikimate: S170, S171, Q172, D297, N320, and K324. Residue Q172 participates in phosphoenolpyruvate binding. The Proton acceptor role is filled by D297. Phosphoenolpyruvate-binding residues include R328, R375, and K400.

It belongs to the EPSP synthase family. Monomer.

It localises to the cytoplasm. It catalyses the reaction 3-phosphoshikimate + phosphoenolpyruvate = 5-O-(1-carboxyvinyl)-3-phosphoshikimate + phosphate. It participates in metabolic intermediate biosynthesis; chorismate biosynthesis; chorismate from D-erythrose 4-phosphate and phosphoenolpyruvate: step 6/7. In terms of biological role, catalyzes the transfer of the enolpyruvyl moiety of phosphoenolpyruvate (PEP) to the 5-hydroxyl of shikimate-3-phosphate (S3P) to produce enolpyruvyl shikimate-3-phosphate and inorganic phosphate. This Rhizobium leguminosarum bv. trifolii (strain WSM2304) protein is 3-phosphoshikimate 1-carboxyvinyltransferase.